The sequence spans 318 residues: Cytochrome f (318 aa).

An N-terminal signal peptide occupies residues 1–34; it reads MKNNYLANLIKTLQAIVVSVALLAPLVLPSAVNA. Residues Phe35, Cys55, Cys58, and His59 each coordinate heme. A helical membrane pass occupies residues 284-304; it reads VKGLIAFFFTVILAQILLVLK.

It belongs to the cytochrome f family. As to quaternary structure, the 4 large subunits of the cytochrome b6-f complex are cytochrome b6, subunit IV (17 kDa polypeptide, petD), cytochrome f and the Rieske protein, while the 4 small subunits are PetG, PetL, PetM and PetN. The complex functions as a dimer. Heme serves as cofactor.

It is found in the plastid. It localises to the chloroplast thylakoid membrane. In terms of biological role, component of the cytochrome b6-f complex, which mediates electron transfer between photosystem II (PSII) and photosystem I (PSI), cyclic electron flow around PSI, and state transitions. The chain is Cytochrome f from Rhodomonas salina (Cryptomonas salina).